Reading from the N-terminus, the 158-residue chain is Cytochrome c-type biogenesis protein CcmE (158 aa).

Topologically, residues 1–8 (MMRHRNRR) are cytoplasmic. The chain crosses the membrane as a helical; Signal-anchor for type II membrane protein span at residues 9–29 (LATIAASAIVLVVAVGLGLMA). Topologically, residues 30–158 (LRSAVVFFYS…PSAAGDGDSR (129 aa)) are periplasmic. Heme-binding residues include H123 and Y127. The disordered stretch occupies residues 139-158 (AGVWQGEGETPSAAGDGDSR).

It belongs to the CcmE/CycJ family.

Its subcellular location is the cell inner membrane. Heme chaperone required for the biogenesis of c-type cytochromes. Transiently binds heme delivered by CcmC and transfers the heme to apo-cytochromes in a process facilitated by CcmF and CcmH. The chain is Cytochrome c-type biogenesis protein CcmE from Maricaulis maris (strain MCS10) (Caulobacter maris).